A 126-amino-acid polypeptide reads, in one-letter code: MYYPLLSIALGSVLGAWLRWFLGLKLNPIYPQIPLGTVTVNLVGGFIIGFAMAYFAHSDLSPNYKLFVITGFCGALTTFSTFSIEIVTLLQSGKWGMAMLAISIHLIGSLIFTCLGLATYYWVAGH.

A run of 4 helical transmembrane segments spans residues 4–24 (PLLS…FLGL), 33–53 (IPLG…FAMA), 67–87 (FVIT…IEIV), and 97–117 (MAML…CLGL). Na(+)-binding residues include G74 and T77.

It belongs to the fluoride channel Fluc/FEX (TC 1.A.43) family.

It localises to the cell inner membrane. It carries out the reaction fluoride(in) = fluoride(out). Na(+) is not transported, but it plays an essential structural role and its presence is essential for fluoride channel function. Fluoride-specific ion channel. Important for reducing fluoride concentration in the cell, thus reducing its toxicity. The chain is Fluoride-specific ion channel FluC from Acinetobacter baumannii (strain SDF).